The primary structure comprises 178 residues: DNA-directed RNA polymerase subunit beta (178 aa).

The protein belongs to the RNA polymerase beta chain family. As to quaternary structure, the RNAP catalytic core consists of 2 alpha, 1 beta, 1 beta' and 1 omega subunit. When a sigma factor is associated with the core the holoenzyme is formed, which can initiate transcription.

It carries out the reaction RNA(n) + a ribonucleoside 5'-triphosphate = RNA(n+1) + diphosphate. In terms of biological role, DNA-dependent RNA polymerase catalyzes the transcription of DNA into RNA using the four ribonucleoside triphosphates as substrates. This chain is DNA-directed RNA polymerase subunit beta (rpoB), found in Liberibacter asiaticus (Citrus greening disease).